The chain runs to 126 residues: Large ribosomal subunit protein uL14m (126 aa).

This sequence belongs to the universal ribosomal protein uL14 family. As to quaternary structure, component of the mitochondrial large ribosomal subunit (mt-LSU). Mature yeast 74S mitochondrial ribosomes consist of a small (37S) and a large (54S) subunit. The 37S small subunit contains a 15S ribosomal RNA (15S mt-rRNA) and at least 32 different proteins. The 54S large subunit contains a 21S rRNA (21S mt-rRNA) and at least 45 different proteins.

It localises to the mitochondrion. In terms of biological role, component of the mitochondrial ribosome (mitoribosome), a dedicated translation machinery responsible for the synthesis of mitochondrial genome-encoded proteins, including at least some of the essential transmembrane subunits of the mitochondrial respiratory chain. The mitoribosomes are attached to the mitochondrial inner membrane and translation products are cotranslationally integrated into the membrane. The protein is Large ribosomal subunit protein uL14m (mrpl38) of Schizosaccharomyces pombe (strain 972 / ATCC 24843) (Fission yeast).